The following is a 501-amino-acid chain: Carboxypeptidase 1 (501 aa).

Residues 3–496 (IHTYEKEFFD…LIDYLSNKYS (494 aa)) enclose the Peptidase M32 domain. Residues 234–236 (HPF) carry the HPF motif. A DXRXT motif is present at residues 244-248 (DVRVT). Zn(2+) is bound at residue His-265. An HEXXH motif is present at residues 265–269 (HECGH). Glu-266 serves as the catalytic Proton donor/acceptor. 2 residues coordinate Zn(2+): His-269 and Glu-295. Residues 294-297 (HESQ) carry the HES/GQ motif. Positions 347-352 (IRVEAD) match the I/NRXXA/SD motif. The GXXQDXHW motif lies at 402 to 409 (GILQDVHW).

This sequence belongs to the peptidase M32 family. In terms of assembly, homodimer. It depends on Zn(2+) as a cofactor.

The enzyme catalyses Release of a C-terminal amino acid with broad specificity, except for -Pro.. Broad specificity carboxypetidase that releases amino acids sequentially from the C-terminus, including neutral, aromatic, polar and basic residues. Has lower activity with substrates ending with His or Trp. This is Carboxypeptidase 1 (ypwA) from Bacillus subtilis (strain 168).